Reading from the N-terminus, the 116-residue chain is Biogenesis of lysosome-related organelles complex 1 subunit CNL1 (116 aa).

The stretch at 63–95 (DIVDVNIQSFKDILSKCEELENYFTMLDQIEMI) forms a coiled coil.

Belongs to the BLOC1S4 family. In terms of assembly, component of the biogenesis of lysosome-related organelles complex-1 (BLOC-1).

The protein resides in the cytoplasm. In terms of biological role, component of the biogenesis of lysosome-related organelles complex-1 (BLOC-1), a complex that is involved in endosomal cargo sorting. This is Biogenesis of lysosome-related organelles complex 1 subunit CNL1 (CLN1) from Vanderwaltozyma polyspora (strain ATCC 22028 / DSM 70294 / BCRC 21397 / CBS 2163 / NBRC 10782 / NRRL Y-8283 / UCD 57-17) (Kluyveromyces polysporus).